A 315-amino-acid chain; its full sequence is Kinetochore protein SPC25 homolog (315 aa).

M1 carries the post-translational modification N-acetylmethionine. Residues 57–91 adopt a coiled-coil conformation; that stretch reads TAQSQVELMNLKADLREAEDELVKVLAVKTRKEAR. The disordered stretch occupies residues 261–315; that stretch reads APAISFSTDTNMSTPENKRSKVQVNRRQKRGSESPLLAPVSTSATRRSSRFKGKK. Positions 266 to 275 are enriched in polar residues; sequence FSTDTNMSTP. Positions 280-289 are enriched in basic residues; sequence SKVQVNRRQK.

Belongs to the SPC25 family. Component of the NDC80 complex, which consists of NDC80, NUF2, SPC24 and SPC25.

It localises to the chromosome. The protein localises to the centromere. Its function is as follows. Acts as a component of the essential kinetochore-associated NDC80 complex, which is required for chromosome segregation and spindle checkpoint activity to ensure proper cell division. In Arabidopsis thaliana (Mouse-ear cress), this protein is Kinetochore protein SPC25 homolog.